The chain runs to 86 residues: MAKQRKNAPGFEESVARLEEIIRLTEAPVTELEDMIALVEEGNKLIRHCRSILHDAELRIQTLSNPETVQDKTDTDEPDSNEFSLT.

The segment at 64–86 (SNPETVQDKTDTDEPDSNEFSLT) is disordered.

This sequence belongs to the XseB family. In terms of assembly, heterooligomer composed of large and small subunits.

Its subcellular location is the cytoplasm. It catalyses the reaction Exonucleolytic cleavage in either 5'- to 3'- or 3'- to 5'-direction to yield nucleoside 5'-phosphates.. In terms of biological role, bidirectionally degrades single-stranded DNA into large acid-insoluble oligonucleotides, which are then degraded further into small acid-soluble oligonucleotides. This chain is Exodeoxyribonuclease 7 small subunit, found in Akkermansia muciniphila (strain ATCC BAA-835 / DSM 22959 / JCM 33894 / BCRC 81048 / CCUG 64013 / CIP 107961 / Muc).